The sequence spans 98 residues: PqqA binding protein (98 aa).

This sequence belongs to the PqqD family. Monomer. Interacts with PqqE.

The protein operates within cofactor biosynthesis; pyrroloquinoline quinone biosynthesis. Functions as a PqqA binding protein and presents PqqA to PqqE, in the pyrroloquinoline quinone (PQQ) biosynthetic pathway. In Rhizobium meliloti (strain 1021) (Ensifer meliloti), this protein is PqqA binding protein.